Reading from the N-terminus, the 392-residue chain is Antitrypsin (392 aa).

The first 16 residues, 1 to 16 (MKTIICLFTIAIAAMA), serve as a signal peptide directing secretion.

The protein belongs to the serpin family. In terms of tissue distribution, hemolymph.

The protein localises to the secreted. Its function is as follows. May play a role in the prophenoloxidase activating system in the silkworm hemolymph. The protein is Antitrypsin of Bombyx mori (Silk moth).